The chain runs to 405 residues: Probable glucan 1,3-beta-glucosidase A (405 aa).

The signal sequence occupies residues 1–26; the sequence is MFPRISQAAILAHSLLAVCTSAATLA. Glu198 functions as the Proton donor in the catalytic mechanism. 2 disulfide bridges follow: Cys278–Cys403 and Cys304–Cys330. Residue Glu296 is the Nucleophile of the active site.

The protein belongs to the glycosyl hydrolase 5 (cellulase A) family. In terms of assembly, monomer. Mn(2+) serves as cofactor.

It is found in the secreted. It catalyses the reaction Successive hydrolysis of beta-D-glucose units from the non-reducing ends of (1-&gt;3)-beta-D-glucans, releasing alpha-glucose.. Its function is as follows. Beta-glucanases participate in the metabolism of beta-glucan, the main structural component of the cell wall. It could also function biosynthetically as a transglycosylase. In Emericella nidulans (strain FGSC A4 / ATCC 38163 / CBS 112.46 / NRRL 194 / M139) (Aspergillus nidulans), this protein is Probable glucan 1,3-beta-glucosidase A (exgA).